Here is a 377-residue protein sequence, read N- to C-terminus: Progesterone receptor (377 aa).

Residues 1–15 form a modulating, Pro-Rich region; that stretch reads EASQSPQYSFESLPQ. A DNA-binding region (nuclear receptor) is located at residues 16 to 90; it reads KICLICGDEA…AGMVLGGRKF (75 aa). 2 NR C4-type zinc fingers span residues 18–38 and 54–78; these read CLIC…CGSC and CAGR…LRKC. Ser-127 is modified (phosphoserine). In terms of domain architecture, NR LBD spans 130–364; it reads QDLQLIPPLI…EFPEMMSEVI (235 aa). The interval 138 to 377 is AF2; mediates transcriptional activation; that stretch reads LINLLMSIEP…LPKILAGMVK (240 aa).

Belongs to the nuclear hormone receptor family. NR3 subfamily. Interacts with CUEDC2, SMARD1 and with UNC45A. Interacts with PRMT2. Interacts with NCOA2 and NCOA1. Interacts with KLF9. Interacts with GTF2B. In terms of processing, palmitoylated by ZDHHC7 and ZDHHC21. Palmitoylation is required for plasma membrane targeting and for rapid intracellular signaling via ERK and AKT kinases and cAMP generation.

It localises to the nucleus. Its function is as follows. The steroid hormones and their receptors are involved in the regulation of eukaryotic gene expression and affect cellular proliferation and differentiation in target tissues. Transcriptional activator of several progesteron-dependent promoters in a variety of cell types. Involved in activation of SRC-dependent MAPK signaling on hormone stimulation. The protein is Progesterone receptor (PGR) of Ovis aries (Sheep).